Consider the following 1238-residue polypeptide: Topoisomerase 1-associated factor 1 (1238 aa).

2 positions are modified to phosphoserine: serine 626 and serine 654. Residues 1008-1051 (GIARSKKKDKRKRRKGEAKTNLPMFGDQDDERPQTVRERHGVFS) form a disordered region. Over residues 1010–1023 (ARSKKKDKRKRRKG) the composition is skewed to basic residues. Residues 1038 to 1050 (ERPQTVRERHGVF) are compositionally biased toward basic and acidic residues. A phosphoserine mark is found at serine 1056 and serine 1058. Positions 1159 to 1218 (NNNNNQLSDDDVNSESRNSLGSSQPSNSQNMFQSEVYSRKESTKRSLEASAADESDEDEE) are disordered. Residues 1173 to 1194 (ESRNSLGSSQPSNSQNMFQSEV) show a composition bias toward polar residues. A compositionally biased stretch (basic and acidic residues) spans 1195–1205 (YSRKESTKRSL). The span at 1209-1218 (AADESDEDEE) shows a compositional bias: acidic residues. The residue at position 1213 (serine 1213) is a Phosphoserine.

This sequence belongs to the timeless family. Component of the fork protection complex (FPC) consisting of TOF1 and CSM3. Interacts with WSS1 and ESC4.

The protein localises to the nucleus. Functionally, forms a fork protection complex (FPC) with CSM3 and which is required for chromosome segregation during meiosis and DNA damage repair. FPC coordinates leading and lagging strand synthesis and moves with the replication fork. FPC stabilizes replication forks in a configuration that is recognized by replication checkpoint sensors and protects stalled replication forks against the fork-releasing activity of RRM3 helicase. The chain is Topoisomerase 1-associated factor 1 (TOF1) from Saccharomyces cerevisiae (strain ATCC 204508 / S288c) (Baker's yeast).